Reading from the N-terminus, the 232-residue chain is Enolase-phosphatase E1 (232 aa).

Belongs to the HAD-like hydrolase superfamily. MasA/MtnC family. As to quaternary structure, monomer. The cofactor is Mg(2+).

It catalyses the reaction 5-methylsulfanyl-2,3-dioxopentyl phosphate + H2O = 1,2-dihydroxy-5-(methylsulfanyl)pent-1-en-3-one + phosphate. It participates in amino-acid biosynthesis; L-methionine biosynthesis via salvage pathway; L-methionine from S-methyl-5-thio-alpha-D-ribose 1-phosphate: step 3/6. It functions in the pathway amino-acid biosynthesis; L-methionine biosynthesis via salvage pathway; L-methionine from S-methyl-5-thio-alpha-D-ribose 1-phosphate: step 4/6. In terms of biological role, bifunctional enzyme that catalyzes the enolization of 2,3-diketo-5-methylthiopentyl-1-phosphate (DK-MTP-1-P) into the intermediate 2-hydroxy-3-keto-5-methylthiopentenyl-1-phosphate (HK-MTPenyl-1-P), which is then dephosphorylated to form the acireductone 1,2-dihydroxy-3-keto-5-methylthiopentene (DHK-MTPene). In Xylella fastidiosa (strain M12), this protein is Enolase-phosphatase E1.